A 352-amino-acid polypeptide reads, in one-letter code: Respiratory nitrate reductase subunit beta (352 aa).

In terms of domain architecture, 4Fe-4S ferredoxin-type 1 spans 20–48 (VAMVMDLNKCIGCQTCTVACKSLWTEGGG). Cysteine 29, cysteine 32, cysteine 35, and cysteine 39 together coordinate [4Fe-4S] cluster. Disordered stretches follow at residues 63–95 (KGYPRNWEESGGGWKSSEHKERKPGQIPDKEDY) and 111–131 (SDRPLRPDSDPEWGPNWDEDQ). A compositionally biased stretch (basic and acidic residues) spans 78 to 95 (SSEHKERKPGQIPDKEDY). 4Fe-4S ferredoxin-type domains are found at residues 139–170 (SYYFYLPRICNHCTHPSCVEACPRKAIYKREE) and 172–201 (GIVLIDQERCRGYRYCVEGCPYKKVYYNAT). [4Fe-4S] cluster-binding residues include cysteine 148, cysteine 151, and cysteine 156. Residues cysteine 160, cysteine 181, and cysteine 187 each coordinate [3Fe-4S] cluster. [4Fe-4S] cluster is bound by residues cysteine 191, cysteine 208, cysteine 211, cysteine 229, and cysteine 233.

In terms of assembly, probable multiprotein complex; a catalytic heterodimer of an alpha and beta chain is proposed to associate with additional subunits involved in membrane attachment and electron transfer. [4Fe-4S] cluster serves as cofactor. The cofactor is [3Fe-4S] cluster.

The protein resides in the cell membrane. The enzyme catalyses nitrate + a quinol = a quinone + nitrite + H2O. With respect to regulation, inhibited by cyanide, azide and antimycin A. Enzyme stability is not dependent on salt concentration. In terms of biological role, the respiratory membrane-bound nitrate reductase enzyme complex plays a role in generation of metabolic energy by using nitrate as a terminal electron acceptor during anaerobic conditions. The beta chain is an electron transfer unit containing four cysteine clusters involved in the formation of iron-sulfur centers. The sequence is that of Respiratory nitrate reductase subunit beta (narH) from Haloferax mediterranei (strain ATCC 33500 / DSM 1411 / JCM 8866 / NBRC 14739 / NCIMB 2177 / R-4) (Halobacterium mediterranei).